The chain runs to 343 residues: SH2 domain-containing adapter protein D (343 aa).

The tract at residues 1–176 (MAKWLRDYLN…PADEYDQPWE (176 aa)) is disordered. 2 stretches are compositionally biased toward basic and acidic residues: residues 29–40 (DILRAYREQKDL) and 73–82 (IKVEAADMAR). Acidic residues predominate over residues 92-102 (EEPEAETEYSD). Residues 160–176 (RPLEDERPADEYDQPWE) are compositionally biased toward basic and acidic residues. The 96-residue stretch at 225-320 (WFHGPLSRAE…AEHLALLYPV (96 aa)) folds into the SH2 domain. Residues 322 to 343 (SSQSSQGPCTLAAKPERGQGDP) are disordered.

Post-translationally, tyrosine phosphorylated by ABL. In terms of tissue distribution, specifically expressed in brain.

May function as an adapter protein. This chain is SH2 domain-containing adapter protein D (Shd), found in Mus musculus (Mouse).